A 401-amino-acid polypeptide reads, in one-letter code: Glutamyl-tRNA reductase (401 aa).

Substrate is bound by residues 45-48 (TCNR), S101, 106-108 (EDQ), and Q112. Residue C46 is the Nucleophile of the active site. 177–182 (GYGDVG) contacts NADP(+).

Belongs to the glutamyl-tRNA reductase family. As to quaternary structure, homodimer.

The enzyme catalyses (S)-4-amino-5-oxopentanoate + tRNA(Glu) + NADP(+) = L-glutamyl-tRNA(Glu) + NADPH + H(+). Its pathway is porphyrin-containing compound metabolism; protoporphyrin-IX biosynthesis; 5-aminolevulinate from L-glutamyl-tRNA(Glu): step 1/2. Its function is as follows. Catalyzes the NADPH-dependent reduction of glutamyl-tRNA(Glu) to glutamate 1-semialdehyde (GSA). This chain is Glutamyl-tRNA reductase, found in Clostridium botulinum (strain Eklund 17B / Type B).